A 116-amino-acid polypeptide reads, in one-letter code: Venom protein 54.1 (116 aa).

The first 19 residues, 1–19 (MNFQVFSLIFFNFVYYCSC), serve as a signal peptide directing secretion.

In terms of processing, contains 3 disulfide bonds. As to expression, expressed by the venom gland.

It is found in the secreted. This is Venom protein 54.1 from Lychas mucronatus (Chinese swimming scorpion).